We begin with the raw amino-acid sequence, 414 residues long: Tryptophan synthase beta chain (414 aa).

The disordered stretch occupies residues 1–26; the sequence is MVSTFSRKNQNYKKDDLNQPSKDGRF. Residues 12 to 26 show a composition bias toward basic and acidic residues; that stretch reads YKKDDLNQPSKDGRF. Lys-109 bears the N6-(pyridoxal phosphate)lysine mark.

Belongs to the TrpB family. As to quaternary structure, tetramer of two alpha and two beta chains. It depends on pyridoxal 5'-phosphate as a cofactor.

It carries out the reaction (1S,2R)-1-C-(indol-3-yl)glycerol 3-phosphate + L-serine = D-glyceraldehyde 3-phosphate + L-tryptophan + H2O. The protein operates within amino-acid biosynthesis; L-tryptophan biosynthesis; L-tryptophan from chorismate: step 5/5. In terms of biological role, the beta subunit is responsible for the synthesis of L-tryptophan from indole and L-serine. In Prochlorococcus marinus (strain MIT 9215), this protein is Tryptophan synthase beta chain.